We begin with the raw amino-acid sequence, 193 residues long: Fe/S biogenesis protein NfuA (193 aa).

[4Fe-4S] cluster is bound by residues cysteine 149 and cysteine 152.

This sequence belongs to the NfuA family. In terms of assembly, homodimer. It depends on [4Fe-4S] cluster as a cofactor.

Its function is as follows. Involved in iron-sulfur cluster biogenesis. Binds a 4Fe-4S cluster, can transfer this cluster to apoproteins, and thereby intervenes in the maturation of Fe/S proteins. Could also act as a scaffold/chaperone for damaged Fe/S proteins. This chain is Fe/S biogenesis protein NfuA, found in Psychromonas ingrahamii (strain DSM 17664 / CCUG 51855 / 37).